Reading from the N-terminus, the 105-residue chain is Pyrimidine/purine nucleoside phosphorylase (105 aa).

This sequence belongs to the nucleoside phosphorylase PpnP family.

It catalyses the reaction a purine D-ribonucleoside + phosphate = a purine nucleobase + alpha-D-ribose 1-phosphate. The enzyme catalyses adenosine + phosphate = alpha-D-ribose 1-phosphate + adenine. It carries out the reaction cytidine + phosphate = cytosine + alpha-D-ribose 1-phosphate. The catalysed reaction is guanosine + phosphate = alpha-D-ribose 1-phosphate + guanine. It catalyses the reaction inosine + phosphate = alpha-D-ribose 1-phosphate + hypoxanthine. The enzyme catalyses thymidine + phosphate = 2-deoxy-alpha-D-ribose 1-phosphate + thymine. It carries out the reaction uridine + phosphate = alpha-D-ribose 1-phosphate + uracil. The catalysed reaction is xanthosine + phosphate = alpha-D-ribose 1-phosphate + xanthine. In terms of biological role, catalyzes the phosphorolysis of diverse nucleosides, yielding D-ribose 1-phosphate and the respective free bases. Can use uridine, adenosine, guanosine, cytidine, thymidine, inosine and xanthosine as substrates. Also catalyzes the reverse reactions. This is Pyrimidine/purine nucleoside phosphorylase from Paracidovorax citrulli (strain AAC00-1) (Acidovorax citrulli).